Consider the following 121-residue polypeptide: ATP synthase epsilon chain (121 aa).

The protein belongs to the ATPase epsilon chain family. In terms of assembly, F-type ATPases have 2 components, CF(1) - the catalytic core - and CF(0) - the membrane proton channel. CF(1) has five subunits: alpha(3), beta(3), gamma(1), delta(1), epsilon(1). CF(0) has three main subunits: a, b and c.

It is found in the cell membrane. Functionally, produces ATP from ADP in the presence of a proton gradient across the membrane. This chain is ATP synthase epsilon chain, found in Mycolicibacterium smegmatis (strain ATCC 700084 / mc(2)155) (Mycobacterium smegmatis).